The chain runs to 102 residues: Small ribosomal subunit protein uS10 (102 aa).

This sequence belongs to the universal ribosomal protein uS10 family. Part of the 30S ribosomal subunit.

Involved in the binding of tRNA to the ribosomes. The polypeptide is Small ribosomal subunit protein uS10 (Mesoplasma florum (strain ATCC 33453 / NBRC 100688 / NCTC 11704 / L1) (Acholeplasma florum)).